The sequence spans 350 residues: DNA repair protein rhp55 (350 aa).

51–58 lines the ATP pocket; sequence GAPGMGKT. Residues 331–350 form a disordered region; it reads QSIPTNSSQRRKRSILECES.

Belongs to the RecA family. RAD55 subfamily.

Its subcellular location is the nucleus. Required for radiation resistance and meiotic viability and acts in recombination and recombinational DNA repair pathways. The chain is DNA repair protein rhp55 (rhp55) from Schizosaccharomyces pombe (strain 972 / ATCC 24843) (Fission yeast).